The following is a 450-amino-acid chain: Molybdate-anion transporter (450 aa).

Transmembrane regions (helical) follow at residues methionine 1–leucine 21, leucine 43–leucine 63, isoleucine 79–valine 99, phenylalanine 128–phenylalanine 148, alanine 174–serine 194, tryptophan 195–glycine 215, valine 249–leucine 269, glycine 278–leucine 298, proline 311–phenylalanine 331, phenylalanine 344–leucine 364, glycine 376–leucine 396, and phenylalanine 409–valine 429.

It belongs to the major facilitator superfamily. In terms of tissue distribution, expressed ubiquitously but at relatively higher levels in the olfactory bulb and the skeletal muscle.

It is found in the cell membrane. Functionally, mediates high-affinity intracellular uptake of the rare oligo-element molybdenum. The sequence is that of Molybdate-anion transporter (MFSD5) from Homo sapiens (Human).